We begin with the raw amino-acid sequence, 449 residues long: Glucose-6-phosphate isomerase (449 aa).

Residue Glu-291 is the Proton donor of the active site. Active-site residues include His-312 and Lys-426.

It belongs to the GPI family.

Its subcellular location is the cytoplasm. It carries out the reaction alpha-D-glucose 6-phosphate = beta-D-fructose 6-phosphate. It functions in the pathway carbohydrate biosynthesis; gluconeogenesis. Its pathway is carbohydrate degradation; glycolysis; D-glyceraldehyde 3-phosphate and glycerone phosphate from D-glucose: step 2/4. Its function is as follows. Catalyzes the reversible isomerization of glucose-6-phosphate to fructose-6-phosphate. In Streptococcus pyogenes serotype M5 (strain Manfredo), this protein is Glucose-6-phosphate isomerase.